The following is a 702-amino-acid chain: NAD(P)H-quinone oxidoreductase subunit 5, chloroplastic (702 aa).

Transmembrane regions (helical) follow at residues 7-27, 40-60, 91-111, 124-144, 147-167, 189-209, 224-244, 258-278, 289-309, 327-347, 354-374, 395-415, 427-447, 511-531, 562-582, and 680-700; these read YVWIIPLLPCLTAVILGLGLI, SAILSIGALLVTMLLSITVLW, PLSAIMLVLVTTVGVLVMIYT, FFAYLSLFTASMLGLVLSPNL, VYAFWELVGMCSYLLVGFWFT, LLLGILALYWLTGSLEFDIVA, VLLTVCCVLLFLGPIAKSAQF, TPISALIHAATMVAAGVYLVA, LVMDIVAWTGGITAVLGATVA, LGYMILALGVGSYQAGLFHLI, ALLFLGSGSVIHGIEPVVGYN, GVTFLIGTLSLCGVPPFACFW, KLPVLGLLAWLTAGLTAFYMF, IPLIVLTIPTILIGFIGAPLP, FAITALPSVSIGILGAFIAWI, and IFVLGIGLVFVMIAAVLFNFF.

This sequence belongs to the complex I subunit 5 family. NDH is composed of at least 16 different subunits, 5 of which are encoded in the nucleus.

Its subcellular location is the plastid. It localises to the chloroplast thylakoid membrane. It catalyses the reaction a plastoquinone + NADH + (n+1) H(+)(in) = a plastoquinol + NAD(+) + n H(+)(out). It carries out the reaction a plastoquinone + NADPH + (n+1) H(+)(in) = a plastoquinol + NADP(+) + n H(+)(out). NDH shuttles electrons from NAD(P)H:plastoquinone, via FMN and iron-sulfur (Fe-S) centers, to quinones in the photosynthetic chain and possibly in a chloroplast respiratory chain. The immediate electron acceptor for the enzyme in this species is believed to be plastoquinone. Couples the redox reaction to proton translocation, and thus conserves the redox energy in a proton gradient. The polypeptide is NAD(P)H-quinone oxidoreductase subunit 5, chloroplastic (ndhF) (Zygnema circumcarinatum (Green alga)).